The following is a 206-amino-acid chain: Small ribosomal subunit protein uS4 (206 aa).

The disordered stretch occupies residues 18-44 (NIWGRPKSPVNRREYGPGQHGQRRKGK). One can recognise an S4 RNA-binding domain in the interval 94–157 (RRLDAVVYRA…KQLAVVLEAV (64 aa)).

Belongs to the universal ribosomal protein uS4 family. As to quaternary structure, part of the 30S ribosomal subunit. Contacts protein S5. The interaction surface between S4 and S5 is involved in control of translational fidelity.

Its function is as follows. One of the primary rRNA binding proteins, it binds directly to 16S rRNA where it nucleates assembly of the body of the 30S subunit. Functionally, with S5 and S12 plays an important role in translational accuracy. This Jannaschia sp. (strain CCS1) protein is Small ribosomal subunit protein uS4.